The following is a 274-amino-acid chain: Formamidopyrimidine-DNA glycosylase (274 aa).

The active-site Schiff-base intermediate with DNA is the proline 2. Catalysis depends on glutamate 3, which acts as the Proton donor. Lysine 58 (proton donor; for beta-elimination activity) is an active-site residue. Residues histidine 91, arginine 110, and lysine 152 each coordinate DNA. An FPG-type zinc finger spans residues 237–271 (KVYGRKNLPCLVCENKIETVVIAGRHSAFCPHCQP). Arginine 261 serves as the catalytic Proton donor; for delta-elimination activity.

The protein belongs to the FPG family. In terms of assembly, monomer. Requires Zn(2+) as cofactor.

The catalysed reaction is Hydrolysis of DNA containing ring-opened 7-methylguanine residues, releasing 2,6-diamino-4-hydroxy-5-(N-methyl)formamidopyrimidine.. It carries out the reaction 2'-deoxyribonucleotide-(2'-deoxyribose 5'-phosphate)-2'-deoxyribonucleotide-DNA = a 3'-end 2'-deoxyribonucleotide-(2,3-dehydro-2,3-deoxyribose 5'-phosphate)-DNA + a 5'-end 5'-phospho-2'-deoxyribonucleoside-DNA + H(+). Functionally, involved in base excision repair of DNA damaged by oxidation or by mutagenic agents. Acts as a DNA glycosylase that recognizes and removes damaged bases. Has a preference for oxidized purines, such as 7,8-dihydro-8-oxoguanine (8-oxoG). Has AP (apurinic/apyrimidinic) lyase activity and introduces nicks in the DNA strand. Cleaves the DNA backbone by beta-delta elimination to generate a single-strand break at the site of the removed base with both 3'- and 5'-phosphates. The chain is Formamidopyrimidine-DNA glycosylase from Legionella pneumophila (strain Paris).